The sequence spans 301 residues: MKIYILGAGAIGSLVGGLLANVGEDVTLIGRGRHIEAINKRGLMIEGLTNLKINTKATTSIPGAKPDLIILTTKSYSTDDALNSAKDIVRDTWVLSLQNGIGNEEKIMELGGRPIGGITTNGAVLKEPGVVEWRGRGITLIGLYPKGRNEFVEEVKETFNRAGLETEVTENIIGWKWAKTIVNSAINPIGAILEVKNGAIKDNDYLLSIAVEVVKEGCKIALQNGIKFDISPMELLIQTLEQTRENYNSMLQDIWRGKRTEIDFINGKIIEYAKLVNLEAPLNFLLWALVKAKESLGGGSK.

NADP(+) is bound by residues 7-12 (GAGAIG), K74, N99, and A123. The active-site Proton donor is K179. Residues K179, N183, N187, N197, and 246–249 (NYNS) each bind substrate. E261 is a binding site for NADP(+).

This sequence belongs to the ketopantoate reductase family.

The protein localises to the cytoplasm. It carries out the reaction (R)-pantoate + NAD(+) = 2-dehydropantoate + NADH + H(+). The catalysed reaction is (R)-pantoate + NADP(+) = 2-dehydropantoate + NADPH + H(+). It participates in cofactor biosynthesis; coenzyme A biosynthesis. In terms of biological role, catalyzes the NAD(P)H-dependent reduction of ketopantoate into pantoic acid. In Pyrococcus horikoshii (strain ATCC 700860 / DSM 12428 / JCM 9974 / NBRC 100139 / OT-3), this protein is 2-dehydropantoate 2-reductase.